The chain runs to 89 residues: Small ribosomal subunit protein uS15 (89 aa).

It belongs to the universal ribosomal protein uS15 family. Part of the 30S ribosomal subunit. Forms a bridge to the 50S subunit in the 70S ribosome, contacting the 23S rRNA.

One of the primary rRNA binding proteins, it binds directly to 16S rRNA where it helps nucleate assembly of the platform of the 30S subunit by binding and bridging several RNA helices of the 16S rRNA. Its function is as follows. Forms an intersubunit bridge (bridge B4) with the 23S rRNA of the 50S subunit in the ribosome. This is Small ribosomal subunit protein uS15 from Dictyoglomus thermophilum (strain ATCC 35947 / DSM 3960 / H-6-12).